Here is a 427-residue protein sequence, read N- to C-terminus: Probable threonylcarbamoyladenosine tRNA methylthiotransferase (427 aa).

Residues 12 to 118 form the MTTase N-terminal domain; that stretch reads MRVYVEGYGC…AGEILKNYVE (107 aa). [4Fe-4S] cluster is bound by residues Cys21, Cys57, Cys86, Cys155, Cys159, and Cys162. Residues 141 to 370 enclose the Radical SAM core domain; that stretch reads LKPSLITPLP…DKLRRELSYL (230 aa). The region spanning 373–427 is the TRAM domain; the sequence is KKYIGKAMKVLVLDEGKGYTDNFKVVKFEGGEVGEFRKVKITDAKTFGLKGELIL.

This sequence belongs to the methylthiotransferase family. CDKAL1 subfamily. Requires [4Fe-4S] cluster as cofactor.

It catalyses the reaction N(6)-L-threonylcarbamoyladenosine(37) in tRNA + (sulfur carrier)-SH + AH2 + 2 S-adenosyl-L-methionine = 2-methylsulfanyl-N(6)-L-threonylcarbamoyladenosine(37) in tRNA + (sulfur carrier)-H + 5'-deoxyadenosine + L-methionine + A + S-adenosyl-L-homocysteine + 2 H(+). Functionally, catalyzes the methylthiolation of N6-threonylcarbamoyladenosine (t(6)A), leading to the formation of 2-methylthio-N6-threonylcarbamoyladenosine (ms(2)t(6)A) at position 37 in tRNAs that read codons beginning with adenine. This is Probable threonylcarbamoyladenosine tRNA methylthiotransferase from Methanocaldococcus jannaschii (strain ATCC 43067 / DSM 2661 / JAL-1 / JCM 10045 / NBRC 100440) (Methanococcus jannaschii).